The primary structure comprises 69 residues: Mu-conotoxin-like Am3.1 (69 aa).

Residues 1-20 (MMSKLRVLLIICLLLFPLTA) form the signal peptide. Residues 21–52 (VPLDGDQPADRPAERTQDDISSEHHPMFDAVR) constitute a propeptide that is removed on maturation. The interval 22–43 (PLDGDQPADRPAERTQDDISSE) is disordered. Basic and acidic residues predominate over residues 28 to 43 (PADRPAERTQDDISSE). Proline 66 is subject to 4-hydroxyproline; partial; in minor form. At cysteine 68 the chain carries Cysteine amide.

This sequence belongs to the conotoxin M family. In terms of processing, mostly non-hydroxylated. Contains 3 disulfide bonds. Expressed by the venom duct.

Its subcellular location is the secreted. Mu-conotoxins block voltage-gated sodium channels (Nav). In Conus amadis (Amadis cone), this protein is Mu-conotoxin-like Am3.1.